We begin with the raw amino-acid sequence, 198 residues long: uncharacterized protein (198 aa).

The disordered stretch occupies residues 51–74 (EEPDNGDDRGSRRTTGQGRKWAAH).

This is an uncharacterized protein from Homo sapiens (Human).